We begin with the raw amino-acid sequence, 512 residues long: Probable malate:quinone oxidoreductase (512 aa).

Belongs to the MQO family. Requires FAD as cofactor.

The catalysed reaction is (S)-malate + a quinone = a quinol + oxaloacetate. It participates in carbohydrate metabolism; tricarboxylic acid cycle; oxaloacetate from (S)-malate (quinone route): step 1/1. This is Probable malate:quinone oxidoreductase from Bradyrhizobium diazoefficiens (strain JCM 10833 / BCRC 13528 / IAM 13628 / NBRC 14792 / USDA 110).